Consider the following 168-residue polypeptide: MYSSHQNRAYGSRRLAKETAGALAQAETRGLISEVMYNEDQPWMTQLVLLPLLQQLGQQSRWQLWLTPQQRLSREWVESAGLPLTKVMQVSQMNPQVTLDSMIRALETGNYSVVIAWLHDDLTDDEHRRLTAAAEKGNAMGFLMRPVQPSLPGDRPRSALRIHSGMVH.

The tract at residues 105 to 111 (ALETGNY) is ftsZ binding. Residues 161–168 (RIHSGMVH) form a lon protease binding region.

The protein belongs to the SulA family. Interacts with FtsZ. Post-translationally, is rapidly cleaved and degraded by the Lon protease once DNA damage is repaired.

Its function is as follows. Component of the SOS system and an inhibitor of cell division. Accumulation of SulA causes rapid cessation of cell division and the appearance of long, non-septate filaments. In the presence of GTP, binds a polymerization-competent form of FtsZ in a 1:1 ratio, thus inhibiting FtsZ polymerization and therefore preventing it from participating in the assembly of the Z ring. This mechanism prevents the premature segregation of damaged DNA to daughter cells during cell division. The sequence is that of Cell division inhibitor SulA from Cronobacter sakazakii (strain ATCC BAA-894) (Enterobacter sakazakii).